The primary structure comprises 328 residues: DNA-directed RNA polymerase subunit alpha (328 aa).

The segment at 1 to 231 is alpha N-terminal domain (alpha-NTD); that stretch reads MIYQMQMPAK…EHVTFFANFS (231 aa). Residues 247–328 are alpha C-terminal domain (alpha-CTD); that stretch reads DEFETMRRLL…MDITRYQMKG (82 aa).

This sequence belongs to the RNA polymerase alpha chain family. As to quaternary structure, homodimer. The RNAP catalytic core consists of 2 alpha, 1 beta, 1 beta' and 1 omega subunit. When a sigma factor is associated with the core the holoenzyme is formed, which can initiate transcription.

The catalysed reaction is RNA(n) + a ribonucleoside 5'-triphosphate = RNA(n+1) + diphosphate. In terms of biological role, DNA-dependent RNA polymerase catalyzes the transcription of DNA into RNA using the four ribonucleoside triphosphates as substrates. This is DNA-directed RNA polymerase subunit alpha from Chlorobium luteolum (strain DSM 273 / BCRC 81028 / 2530) (Pelodictyon luteolum).